Here is a 213-residue protein sequence, read N- to C-terminus: Leucyl/phenylalanyl-tRNA--protein transferase (213 aa).

It belongs to the L/F-transferase family.

Its subcellular location is the cytoplasm. The enzyme catalyses N-terminal L-lysyl-[protein] + L-leucyl-tRNA(Leu) = N-terminal L-leucyl-L-lysyl-[protein] + tRNA(Leu) + H(+). It carries out the reaction N-terminal L-arginyl-[protein] + L-leucyl-tRNA(Leu) = N-terminal L-leucyl-L-arginyl-[protein] + tRNA(Leu) + H(+). It catalyses the reaction L-phenylalanyl-tRNA(Phe) + an N-terminal L-alpha-aminoacyl-[protein] = an N-terminal L-phenylalanyl-L-alpha-aminoacyl-[protein] + tRNA(Phe). In terms of biological role, functions in the N-end rule pathway of protein degradation where it conjugates Leu, Phe and, less efficiently, Met from aminoacyl-tRNAs to the N-termini of proteins containing an N-terminal arginine or lysine. The polypeptide is Leucyl/phenylalanyl-tRNA--protein transferase (Rhodospirillum rubrum (strain ATCC 11170 / ATH 1.1.1 / DSM 467 / LMG 4362 / NCIMB 8255 / S1)).